Reading from the N-terminus, the 366-residue chain is S-adenosylmethionine:tRNA ribosyltransferase-isomerase (366 aa).

The protein belongs to the QueA family. As to quaternary structure, monomer.

The protein resides in the cytoplasm. It catalyses the reaction 7-aminomethyl-7-carbaguanosine(34) in tRNA + S-adenosyl-L-methionine = epoxyqueuosine(34) in tRNA + adenine + L-methionine + 2 H(+). It participates in tRNA modification; tRNA-queuosine biosynthesis. Its function is as follows. Transfers and isomerizes the ribose moiety from AdoMet to the 7-aminomethyl group of 7-deazaguanine (preQ1-tRNA) to give epoxyqueuosine (oQ-tRNA). This is S-adenosylmethionine:tRNA ribosyltransferase-isomerase from Bradyrhizobium diazoefficiens (strain JCM 10833 / BCRC 13528 / IAM 13628 / NBRC 14792 / USDA 110).